The primary structure comprises 583 residues: 2-succinyl-5-enolpyruvyl-6-hydroxy-3-cyclohexene-1-carboxylate synthase (583 aa).

Belongs to the TPP enzyme family. MenD subfamily. As to quaternary structure, homodimer. It depends on Mg(2+) as a cofactor. Mn(2+) is required as a cofactor. Requires thiamine diphosphate as cofactor.

The catalysed reaction is isochorismate + 2-oxoglutarate + H(+) = 5-enolpyruvoyl-6-hydroxy-2-succinyl-cyclohex-3-ene-1-carboxylate + CO2. It participates in quinol/quinone metabolism; 1,4-dihydroxy-2-naphthoate biosynthesis; 1,4-dihydroxy-2-naphthoate from chorismate: step 2/7. It functions in the pathway quinol/quinone metabolism; menaquinone biosynthesis. Functionally, catalyzes the thiamine diphosphate-dependent decarboxylation of 2-oxoglutarate and the subsequent addition of the resulting succinic semialdehyde-thiamine pyrophosphate anion to isochorismate to yield 2-succinyl-5-enolpyruvyl-6-hydroxy-3-cyclohexene-1-carboxylate (SEPHCHC). The sequence is that of 2-succinyl-5-enolpyruvyl-6-hydroxy-3-cyclohexene-1-carboxylate synthase from Chlorobium limicola (strain DSM 245 / NBRC 103803 / 6330).